The following is a 393-amino-acid chain: S-adenosylmethionine synthase (393 aa).

His16 lines the ATP pocket. Asp18 is a binding site for Mg(2+). Glu44 is a K(+) binding site. Glu57 and Gln100 together coordinate L-methionine. Residues 100-110 (QSQDIAQGVDK) are flexible loop. ATP is bound by residues 167 to 169 (DAK), 238 to 239 (RF), Asp247, 253 to 254 (RK), Ala270, and Lys274. Asp247 lines the L-methionine pocket. Lys278 contacts L-methionine.

It belongs to the AdoMet synthase family. In terms of assembly, homotetramer; dimer of dimers. Mg(2+) serves as cofactor. Requires K(+) as cofactor.

It localises to the cytoplasm. The catalysed reaction is L-methionine + ATP + H2O = S-adenosyl-L-methionine + phosphate + diphosphate. It functions in the pathway amino-acid biosynthesis; S-adenosyl-L-methionine biosynthesis; S-adenosyl-L-methionine from L-methionine: step 1/1. In terms of biological role, catalyzes the formation of S-adenosylmethionine (AdoMet) from methionine and ATP. The overall synthetic reaction is composed of two sequential steps, AdoMet formation and the subsequent tripolyphosphate hydrolysis which occurs prior to release of AdoMet from the enzyme. This Delftia acidovorans (strain DSM 14801 / SPH-1) protein is S-adenosylmethionine synthase.